Consider the following 268-residue polypeptide: 14-3-3-like protein GF14 iota (268 aa).

Serine 70 and serine 193 each carry phosphoserine. Threonine 214 carries the phosphothreonine modification. The tract at residues 240–268 (DLPEDGGEDNIKTEESKQEQAKPADATEN) is disordered. Positions 248-261 (DNIKTEESKQEQAK) are enriched in basic and acidic residues.

It belongs to the 14-3-3 family. In terms of tissue distribution, expressed in flowers.

Its subcellular location is the nucleus. The protein localises to the cytoplasm. Functionally, is associated with a DNA binding complex that binds to the G box, a well-characterized cis-acting DNA regulatory element found in plant genes. This is 14-3-3-like protein GF14 iota from Arabidopsis thaliana (Mouse-ear cress).